A 105-amino-acid chain; its full sequence is Nucleoid-associated protein EAT1b_1710 (105 aa).

Positions 1-16 are enriched in low complexity; it reads MRGMGNMNNMMKQMQK. Positions 1–26 are disordered; it reads MRGMGNMNNMMKQMQKMQKDMAKAQE. The segment covering 17–26 has biased composition (basic and acidic residues); the sequence is MQKDMAKAQE.

The protein belongs to the YbaB/EbfC family. Homodimer.

It is found in the cytoplasm. It localises to the nucleoid. Binds to DNA and alters its conformation. May be involved in regulation of gene expression, nucleoid organization and DNA protection. This chain is Nucleoid-associated protein EAT1b_1710, found in Exiguobacterium sp. (strain ATCC BAA-1283 / AT1b).